Here is a 49-residue protein sequence, read N- to C-terminus: Large ribosomal subunit protein bL33 (49 aa).

This sequence belongs to the bacterial ribosomal protein bL33 family.

This chain is Large ribosomal subunit protein bL33, found in Lactobacillus acidophilus (strain ATCC 700396 / NCK56 / N2 / NCFM).